Here is a 1043-residue protein sequence, read N- to C-terminus: Liprin-alpha-4 (1043 aa).

2 coiled-coil regions span residues 24–332 (EKVR…GRGG) and 426–470 (ILDA…RVTS). Residues 498-617 (SASPPLSGRS…AKRKGIKSSI (120 aa)) form a disordered region. Phosphoserine is present on Ser-500. A compositionally biased stretch (polar residues) spans 505-516 (GRSTPKLTSRSA). Ser-541 is modified (phosphoserine). Residues 544–555 (SREENREDKATI) are compositionally biased toward basic and acidic residues. The span at 590–602 (QDSNPSSSNSSQD) shows a compositional bias: low complexity. 3 consecutive SAM domains span residues 688–754 (WDGP…MVSL), 803–867 (NHEW…LKRL), and 891–960 (WTND…LLAL). Residues 864 to 890 (LKRLNYDRKELEKRREESQHEIKDVLV) are a coiled coil.

Belongs to the liprin family. Liprin-alpha subfamily. In terms of assembly, forms homodimers and heterodimers with liprins-alpha and liprins-beta. Interacts with the second PTPase domain of PTPRD, PTPRF and PTPRS. Interacts with RIMS1 and RIMS2. Interacts with GIT1 and GIT2. Interacts with GRIP1. Interacts with KIF1A.

It is found in the cytoplasm. The protein localises to the cell surface. Functionally, may regulate the disassembly of focal adhesions. May localize receptor-like tyrosine phosphatases type 2A at specific sites on the plasma membrane, possibly regulating their interaction with the extracellular environment and their association with substrates. The protein is Liprin-alpha-4 (Ppfia4) of Rattus norvegicus (Rat).